The following is a 102-amino-acid chain: Small ribosomal subunit protein bS6 (102 aa).

Belongs to the bacterial ribosomal protein bS6 family.

Its function is as follows. Binds together with bS18 to 16S ribosomal RNA. This Deinococcus geothermalis (strain DSM 11300 / CIP 105573 / AG-3a) protein is Small ribosomal subunit protein bS6.